Here is a 350-residue protein sequence, read N- to C-terminus: Zinc finger protein 367 (350 aa).

A disordered region spans residues 104 to 151 (SGLRGRGAPPPAASASAAASGGEDEEEASSPDSGHLKDGIRRGRPRAD). Positions 137–151 (GHLKDGIRRGRPRAD) are enriched in basic and acidic residues. C2H2-type zinc fingers lie at residues 167-189 (IRCN…KRTH) and 195-219 (YLCD…QRLH). The disordered stretch occupies residues 290–327 (KGKLVQKADQEQQDPLEYLQSDEEDDEKRGAQRRLQEQ). A coiled-coil region spans residues 308 to 342 (LQSDEEDDEKRGAQRRLQEQRERLHGALALIELAN). Serine 310 is subject to Phosphoserine. The span at 316-327 (EKRGAQRRLQEQ) shows a compositional bias: basic and acidic residues.

Belongs to the krueppel C2H2-type zinc-finger protein family.

The protein localises to the nucleus. Functionally, transcriptional activator. Isoform 1 may be involved in transcriptional activation of erythroid genes. This chain is Zinc finger protein 367 (ZNF367), found in Homo sapiens (Human).